We begin with the raw amino-acid sequence, 179 residues long: Large ribosomal subunit protein uL10 (179 aa).

The protein belongs to the universal ribosomal protein uL10 family. As to quaternary structure, part of the ribosomal stalk of the 50S ribosomal subunit. The N-terminus interacts with L11 and the large rRNA to form the base of the stalk. The C-terminus forms an elongated spine to which L12 dimers bind in a sequential fashion forming a multimeric L10(L12)X complex.

Forms part of the ribosomal stalk, playing a central role in the interaction of the ribosome with GTP-bound translation factors. The sequence is that of Large ribosomal subunit protein uL10 from Kosmotoga olearia (strain ATCC BAA-1733 / DSM 21960 / TBF 19.5.1).